Consider the following 534-residue polypeptide: CTP synthase (534 aa).

Positions 1–265 are amidoligase domain; the sequence is MKYIIVTGGV…TTQLMKHLQL (265 aa). Serine 12 contributes to the CTP binding site. Serine 12 contacts UTP. 13–18 is a binding site for ATP; it reads GLGKGI. An L-glutamine-binding site is contributed by tyrosine 53. Aspartate 70 is an ATP binding site. Mg(2+) contacts are provided by aspartate 70 and glutamate 140. CTP contacts are provided by residues 147 to 149, 186 to 191, and lysine 222; these read DIE and KTKPSQ. UTP contacts are provided by residues 186-191 and lysine 222; that span reads KTKPSQ. One can recognise a Glutamine amidotransferase type-1 domain in the interval 289–530; sequence KLAIVGKYTN…VAAMCKYRKE (242 aa). Residue glycine 352 coordinates L-glutamine. The active-site Nucleophile; for glutamine hydrolysis is cysteine 379. Residues 380 to 383, glutamate 403, and arginine 460 each bind L-glutamine; that span reads LGMQ. Catalysis depends on residues histidine 503 and glutamate 505.

Belongs to the CTP synthase family. As to quaternary structure, homotetramer.

It catalyses the reaction UTP + L-glutamine + ATP + H2O = CTP + L-glutamate + ADP + phosphate + 2 H(+). It carries out the reaction L-glutamine + H2O = L-glutamate + NH4(+). The enzyme catalyses UTP + NH4(+) + ATP = CTP + ADP + phosphate + 2 H(+). The protein operates within pyrimidine metabolism; CTP biosynthesis via de novo pathway; CTP from UDP: step 2/2. With respect to regulation, allosterically activated by GTP, when glutamine is the substrate; GTP has no effect on the reaction when ammonia is the substrate. The allosteric effector GTP functions by stabilizing the protein conformation that binds the tetrahedral intermediate(s) formed during glutamine hydrolysis. Inhibited by the product CTP, via allosteric rather than competitive inhibition. Catalyzes the ATP-dependent amination of UTP to CTP with either L-glutamine or ammonia as the source of nitrogen. Regulates intracellular CTP levels through interactions with the four ribonucleotide triphosphates. The polypeptide is CTP synthase (Methanosarcina barkeri (strain Fusaro / DSM 804)).